Reading from the N-terminus, the 1230-residue chain is Protein transport protein Sec31A (1230 aa).

WD repeat units lie at residues 4–47 (KEID…EIFE), 64–111 (SSSH…AGDK), 120–160 (KHTG…TPMT), 166–206 (QPPE…PIIK), 209–254 (DHSN…SPLR), 258–298 (NHAR…VLYE), and 301–342 (TNTQ…DGLR). An interaction with SEC13 region spans residues 161–470 (PGAKTQPPED…IEASQTEFEK (310 aa)). The WD 8; interaction with SEC13 repeat unit spans residues 397–429 (SFSFGGKLVTFESVAVPLQQGAEQQRRQPVFIS). R423 is modified (asymmetric dimethylarginine). Residues S526 and S531 each carry the phosphoserine modification. A Glycyl lysine isopeptide (Lys-Gly) (interchain with G-Cter in ubiquitin) cross-link involves residue K646. Disordered stretches follow at residues 789–905 (QGKP…ASNA) and 924–1104 (MYTA…PIGN). S798 carries the phosphoserine modification. The interaction with PDCD6 stretch occupies residues 799 to 1123 (SQSPYERQPL…TEKITKKPIP (325 aa)). The ALG-2-binding site motif-2 (ABS-2) signature appears at 841–847 (GFIMQGN). The span at 866-876 (QLPPYPQPQPY) shows a compositional bias: pro residues. 2 stretches are compositionally biased toward low complexity: residues 930–940 (ASSPTSSSAAS) and 959–975 (PSSSAYALPPGTTGTPP). Polar residues-rich tracts occupy residues 981–995 (PASQRTENQSFQDQA) and 1033–1064 (PIMNPSGDPQSQGLQQQPSTPGPLSSHASFPQ). T1171 is modified (phosphothreonine). Phosphoserine is present on S1173. A Glycyl lysine isopeptide (Lys-Gly) (interchain with G-Cter in ubiquitin) cross-link involves residue K1227.

The protein belongs to the WD repeat SEC31 family. COPII is composed of at least 5 proteins: the SEC23/24 complex, the SEC13/31 complex and SAR1. SEC13 and SEC31 make a 2:2 tetramer that forms the edge element of the COPII outer coat. The tetramer self-assembles in multiple copies to form the complete polyhedral cage. Interacts (via WD 8) with SEC13. Interacts with PDCD6; interaction takes place in response to cytosolic calcium increase and leads to bridge together the BCR(KLHL12) complex and SEC31A, leading to monoubiquitination. Interacts with KLHL12. In terms of processing, monoubiquitinated by the BCR(KLHL12) E3 ubiquitin ligase complex, leading to regulate the size of COPII coats.

It localises to the cytoplasm. It is found in the cytoplasmic vesicle. Its subcellular location is the COPII-coated vesicle membrane. The protein resides in the endoplasmic reticulum membrane. Component of the coat protein complex II (COPII) which promotes the formation of transport vesicles from the endoplasmic reticulum (ER). The coat has two main functions, the physical deformation of the endoplasmic reticulum membrane into vesicles and the selection of cargo molecules. The polypeptide is Protein transport protein Sec31A (Sec31a) (Mus musculus (Mouse)).